A 344-amino-acid polypeptide reads, in one-letter code: Tripartite motif-containing protein 44 (344 aa).

Disordered stretches follow at residues 1–25 (MASG…EPDE) and 66–165 (AWTP…EFDP). Residues 75-92 (GAGKEEAEVKVEQEREIE) are compositionally biased toward basic and acidic residues. Acidic residues predominate over residues 93 to 165 (SEAGEESESE…ETEAESEFDP (73 aa)). A B box-type zinc finger spans residues 174–215 (VAKRKCPDHGLDLSTYCQEDRQLICVLCPVIGAHQGHQLSTL). 4 residues coordinate Zn(2+): Cys-179, His-182, Cys-201, and His-207. Positions 290–325 (AHVTEILADIQSHMDRLMTQMAQAKEQLDTSNESAE) form a coiled coil. Residues 309–344 (QMAQAKEQLDTSNESAEPKAEGDEEGPSGASEEEDT) are disordered. The segment covering 330–344 (GDEEGPSGASEEEDT) has biased composition (acidic residues). 2 positions are modified to phosphoserine: Ser-336 and Ser-339.

As to quaternary structure, interacts (via coiled coil) with TRIM17 (via coiled coil). Highly expressed in testis.

Its function is as follows. May play a role in the process of differentiation and maturation of neuronal cells. May regulate the activity of TRIM17. Is a negative regulator of PAX6 expression. This Homo sapiens (Human) protein is Tripartite motif-containing protein 44 (TRIM44).